The sequence spans 281 residues: Probable feruloyl esterase A (281 aa).

Positions M1–A21 are cleaved as a signal peptide. Disulfide bonds link C50–C279, C112–C115, and C248–C255. Substrate is bound at residue D98. Residue N100 is glycosylated (N-linked (GlcNAc...) asparagine). Position 101 (Y101) interacts with substrate. S154 functions as the Nucleophile in the catalytic mechanism. D215 serves as the catalytic Charge relay system. Substrate is bound at residue H268. H268 (charge relay system) is an active-site residue.

Belongs to the AB hydrolase superfamily. FaeA family.

It localises to the secreted. The catalysed reaction is feruloyl-polysaccharide + H2O = ferulate + polysaccharide.. Involved in degradation of plant cell walls. Hydrolyzes the feruloyl-arabinose ester bond in arabinoxylans, and the feruloyl-galactose ester bond in pectin. The sequence is that of Probable feruloyl esterase A (faeA) from Aspergillus niger (strain ATCC MYA-4892 / CBS 513.88 / FGSC A1513).